A 529-amino-acid chain; its full sequence is UDP-glucuronosyltransferase 2B33 (529 aa).

The first 24 residues, 1-24, serve as a signal peptide directing secretion; it reads MSVKWTSIILLIQLSFYFSSGSCG. N-linked (GlcNAc...) asparagine glycans are attached at residues asparagine 67 and asparagine 68. The helical transmembrane segment at 494–514 threads the bilayer; the sequence is IGFLLACVATVIFIIMKCCLF.

Belongs to the UDP-glycosyltransferase family.

It is found in the microsome membrane. The protein resides in the endoplasmic reticulum membrane. It carries out the reaction glucuronate acceptor + UDP-alpha-D-glucuronate = acceptor beta-D-glucuronoside + UDP + H(+). UDPGTs are of major importance in the conjugation and subsequent elimination of potentially toxic xenobiotics and endogenous compounds. This isozyme has glucuronidating capacity on estriol and does not catalyze the glucuronidation of beta-estradiol. Capable of conjugating 4-hydroxyestrone, androsterone, diclofenac, and hyodeoxycholic acid. The polypeptide is UDP-glucuronosyltransferase 2B33 (UGT2B33) (Macaca mulatta (Rhesus macaque)).